The sequence spans 528 residues: Carboxysome shell carbonic anhydrase (528 aa).

The disordered stretch occupies residues 17-47 (PIAPNPRWQKENPTAHGSTDTGGFGYNGGNE). Cysteine 184 provides a ligand contact to Zn(2+). Aspartate 186 serves as the catalytic Proton acceptor. The Zn(2+) site is built by histidine 252 and cysteine 263.

It belongs to the beta-class carbonic anhydrase family. CsoSCA subfamily. As to quaternary structure, homodimer. The cofactor is Zn(2+).

It localises to the carboxysome. It carries out the reaction hydrogencarbonate + H(+) = CO2 + H2O. Inhibited by ethoxyzolamide and dithiothreitol (in crude extracts upon expression in E.coli). Functionally, reversible hydration of carbon dioxide. This bacteria encodes at least 3 CA enzymes. Essential for chemolithotrophic carbon dioxide fixation, supplies CO(2) to RuBisCO (ribulose bisphosphate carboxylase, cbbL-cbbS) in the carboxysome. This Hydrogenovibrio crunogenus (strain DSM 25203 / XCL-2) (Thiomicrospira crunogena) protein is Carboxysome shell carbonic anhydrase.